Reading from the N-terminus, the 175-residue chain is MKAMERWFNVGKIVNTHGIRGEVRVISRTDFPEERYKKGNKLYIFRERDTEPIEVTVKSHRVHKSFDLLSFEGYDSINDVERFKGAMLKVPESQLGELAEGEYYFHEIIGCTVVTEGGETIGAVKEILTPGANDVWVVRREDGSEALIPYIDEVVLHVDPERKTIIIRPMEGLLE.

The PRC barrel domain occupies 100–173; it reads EGEYYFHEII…TIIIRPMEGL (74 aa).

It belongs to the RimM family. Binds ribosomal protein uS19.

Its subcellular location is the cytoplasm. Functionally, an accessory protein needed during the final step in the assembly of 30S ribosomal subunit, possibly for assembly of the head region. Essential for efficient processing of 16S rRNA. May be needed both before and after RbfA during the maturation of 16S rRNA. It has affinity for free ribosomal 30S subunits but not for 70S ribosomes. In Geobacillus kaustophilus (strain HTA426), this protein is Ribosome maturation factor RimM.